Consider the following 180-residue polypeptide: Large ribosomal subunit protein bL17 (180 aa).

Positions 134-180 (AQAKAKKAAAMPTEESEAKPAEEGDVVGASEPDAKAPEEPPTEAPEN) are disordered.

Belongs to the bacterial ribosomal protein bL17 family. In terms of assembly, part of the 50S ribosomal subunit. Contacts protein L32.

The sequence is that of Large ribosomal subunit protein bL17 from Mycobacterium tuberculosis (strain CDC 1551 / Oshkosh).